Reading from the N-terminus, the 224-residue chain is Peroxiredoxin-6 (224 aa).

The Thioredoxin domain occupies 5–169; sequence LLLGDEAPNF…ILRVVISLQL (165 aa). A required and sufficient for targeting to lysosomes and lamellar bodies region spans residues 31 to 40; the sequence is DSWGILFSHP. Position 44 is a phosphothreonine (Thr-44). The Cysteine sulfenic acid (-SOH) intermediate; for peroxidase activity role is filled by Cys-47. N6-acetyllysine is present on Lys-63. Residue Tyr-89 is modified to Phosphotyrosine. The active-site For phospholipase activity is the Asp-140. Thr-177 carries the post-translational modification Phosphothreonine; by MAPK. Lys-209 carries the N6-acetyllysine; alternate modification. Lys-209 bears the N6-succinyllysine; alternate mark.

This sequence belongs to the peroxiredoxin family. Prx6 subfamily. Homodimer. Interacts with GSTP1; mediates PRDX6 glutathionylation and regeneration. Interacts with APEX1. Interacts with STH. May interact with FAM168B. May interact with HTR2A. Post-translationally, irreversibly inactivated by overoxidation of Cys-47 to sulfinic acid (Cys-SO(2)H) and sulfonic acid (Cys-SO(3)H) forms upon oxidative stress. Phosphorylation at Thr-177 by MAP kinases increases the phospholipase activity of the enzyme. The phosphorylated form exhibits a greater lysophosphatidylcholine acyltransferase activity compared to the non-phosphorylated form.

Its subcellular location is the cytoplasm. It is found in the lysosome. It catalyses the reaction a hydroperoxide + 2 glutathione = an alcohol + glutathione disulfide + H2O. It carries out the reaction a 1,2-diacyl-sn-glycero-3-phosphocholine + H2O = a 1-acyl-sn-glycero-3-phosphocholine + a fatty acid + H(+). The catalysed reaction is a 1-acyl-sn-glycero-3-phosphocholine + an acyl-CoA = a 1,2-diacyl-sn-glycero-3-phosphocholine + CoA. The enzyme catalyses 1-hexadecanoyl-sn-glycero-3-phosphocholine + hexadecanoyl-CoA = 1,2-dihexadecanoyl-sn-glycero-3-phosphocholine + CoA. It catalyses the reaction 1,2-dihexadecanoyl-sn-glycero-3-phosphocholine + H2O = 1-hexadecanoyl-sn-glycero-3-phosphocholine + hexadecanoate + H(+). Thiol-specific peroxidase that catalyzes the reduction of hydrogen peroxide and organic hydroperoxides to water and alcohols, respectively. Can reduce H(2)O(2) and short chain organic, fatty acid, and phospholipid hydroperoxides. Also has phospholipase activity, and can therefore either reduce the oxidized sn-2 fatty acyl group of phospholipids (peroxidase activity) or hydrolyze the sn-2 ester bond of phospholipids (phospholipase activity). These activities are dependent on binding to phospholipids at acidic pH and to oxidized phospholipds at cytosolic pH. Plays a role in cell protection against oxidative stress by detoxifying peroxides and in phospholipid homeostasis. Exhibits acyl-CoA-dependent lysophospholipid acyltransferase which mediates the conversion of lysophosphatidylcholine (1-acyl-sn-glycero-3-phosphocholine or LPC) into phosphatidylcholine (1,2-diacyl-sn-glycero-3-phosphocholine or PC). Shows a clear preference for LPC as the lysophospholipid and for palmitoyl CoA as the fatty acyl substrate. The sequence is that of Peroxiredoxin-6 (PRDX6) from Macaca fascicularis (Crab-eating macaque).